Here is a 472-residue protein sequence, read N- to C-terminus: NADH-quinone oxidoreductase subunit N (472 aa).

Transmembrane regions (helical) follow at residues Leu5 to Leu25, Ala36 to Ile56, Ile77 to Pro97, Phe103 to Leu123, Leu126 to Gly146, Leu158 to Leu178, Leu197 to Phe217, Pro229 to Val249, Trp264 to Ile284, Met292 to Met309, Ile319 to Ala339, Ala363 to Val383, Gly396 to Leu416, and Leu441 to Ala461.

The protein belongs to the complex I subunit 2 family. NDH-1 is composed of 14 different subunits. Subunits NuoA, H, J, K, L, M, N constitute the membrane sector of the complex.

The protein resides in the cell membrane. It catalyses the reaction a quinone + NADH + 5 H(+)(in) = a quinol + NAD(+) + 4 H(+)(out). NDH-1 shuttles electrons from NADH, via FMN and iron-sulfur (Fe-S) centers, to quinones in the respiratory chain. The immediate electron acceptor for the enzyme in this species is believed to be a menaquinone. Couples the redox reaction to proton translocation (for every two electrons transferred, four hydrogen ions are translocated across the cytoplasmic membrane), and thus conserves the redox energy in a proton gradient. In Heliobacterium modesticaldum (strain ATCC 51547 / Ice1), this protein is NADH-quinone oxidoreductase subunit N.